The primary structure comprises 233 residues: Orotidine 5'-phosphate decarboxylase (233 aa).

Residues Asp-12, Lys-34, 61–70 (DLKFHDIPNT), Thr-120, Arg-181, Gln-190, Gly-210, and Arg-211 contribute to the substrate site. Lys-63 (proton donor) is an active-site residue.

This sequence belongs to the OMP decarboxylase family. Type 1 subfamily. Homodimer.

It carries out the reaction orotidine 5'-phosphate + H(+) = UMP + CO2. The protein operates within pyrimidine metabolism; UMP biosynthesis via de novo pathway; UMP from orotate: step 2/2. Catalyzes the decarboxylation of orotidine 5'-monophosphate (OMP) to uridine 5'-monophosphate (UMP). This chain is Orotidine 5'-phosphate decarboxylase, found in Hahella chejuensis (strain KCTC 2396).